We begin with the raw amino-acid sequence, 123 residues long: Proteasome assembly chaperone 4 (123 aa).

This sequence belongs to the PSMG4 family. In terms of assembly, interacts with PSMG3. Associates with alpha subunits of the 20S proteasome.

In terms of biological role, chaperone protein which promotes assembly of the 20S proteasome. The chain is Proteasome assembly chaperone 4 from Homo sapiens (Human).